A 922-amino-acid polypeptide reads, in one-letter code: Hexokinase-3 (922 aa).

A disordered region spans residues 1–23 (MATIGPSGLHPGERASVCPHEGV). 2 Hexokinase domains span residues 25 to 469 (RPSG…MVTA) and 475 to 911 (AAHR…LVTA). The segment at 82 to 218 (HGTEQGDFLV…TYRIDVVAMV (137 aa)) is hexokinase small subdomain 1. 93-100 (ELGATGAS) lines the ATP pocket. Position 93-102 (93-102 (ELGATGASLR)) interacts with D-glucose 6-phosphate. D-glucose is bound by residues Ser-166, 183–184 (TK), and 219–220 (ND). The interval 219–458 (NDTVGTMMGC…CDVSFIPSVD (240 aa)) is hexokinase large subdomain 1. 2 residues coordinate D-glucose 6-phosphate: Asp-220 and Thr-243. Residues Asn-246, Glu-271, and 302 to 305 (QRFE) contribute to the D-glucose site. 424 to 426 (GGR) is a D-glucose 6-phosphate binding site. ATP contacts are provided by residues 436 to 437 (RI) and 540 to 545 (DLGGTN). Positions 529–660 (DGSERGDFLA…AVELNVVAIV (132 aa)) are hexokinase small subdomain 2. Residue 540–544 (DLGGT) coordinates D-glucose 6-phosphate. D-glucose contacts are provided by residues 608–609 (SF), 625–626 (TK), and 661–662 (ND). The interval 661-900 (NDTVGTMMSC…CTVTFLQSED (240 aa)) is hexokinase large subdomain 2. Asp-662 and Thr-685 together coordinate D-glucose 6-phosphate. Thr-685 provides a ligand contact to ATP. D-glucose-binding positions include 687 to 688 (TN), Glu-713, and Glu-747. Residues 752-753 (GM), 789-793 (TKFLS), and 868-872 (TLYKL) each bind ATP. Residues 866–868 (DGT) and Ser-902 contribute to the D-glucose 6-phosphate site.

Belongs to the hexokinase family.

It carries out the reaction a D-hexose + ATP = a D-hexose 6-phosphate + ADP + H(+). The enzyme catalyses D-fructose + ATP = D-fructose 6-phosphate + ADP + H(+). It catalyses the reaction D-glucose + ATP = D-glucose 6-phosphate + ADP + H(+). The protein operates within carbohydrate metabolism; hexose metabolism. It functions in the pathway carbohydrate degradation; glycolysis; D-glyceraldehyde 3-phosphate and glycerone phosphate from D-glucose: step 1/4. Hexokinase is an allosteric enzyme inhibited by its product D-glucose 6-phosphate. In terms of biological role, catalyzes the phosphorylation of hexose, such as D-glucose and D-fructose, to hexose 6-phosphate (D-glucose 6-phosphate and D-fructose 6-phosphate, respectively). Mediates the initial step of glycolysis by catalyzing phosphorylation of D-glucose to D-glucose 6-phosphate. This chain is Hexokinase-3, found in Mus musculus (Mouse).